Consider the following 498-residue polypeptide: Glycerol kinase (498 aa).

Position 12 (Thr12) interacts with ADP. Residues Thr12, Thr13, and Ser14 each coordinate ATP. Thr12 is a binding site for sn-glycerol 3-phosphate. Arg16 lines the ADP pocket. The sn-glycerol 3-phosphate site is built by Arg82, Glu83, Tyr134, and Asp243. Residues Arg82, Glu83, Tyr134, Asp243, and Gln244 each contribute to the glycerol site. The ADP site is built by Thr265 and Gly308. 4 residues coordinate ATP: Thr265, Gly308, Gln312, and Gly409. Residues Gly409 and Asn413 each coordinate ADP.

It belongs to the FGGY kinase family.

It carries out the reaction glycerol + ATP = sn-glycerol 3-phosphate + ADP + H(+). Its pathway is polyol metabolism; glycerol degradation via glycerol kinase pathway; sn-glycerol 3-phosphate from glycerol: step 1/1. Its activity is regulated as follows. Inhibited by fructose 1,6-bisphosphate (FBP). Key enzyme in the regulation of glycerol uptake and metabolism. Catalyzes the phosphorylation of glycerol to yield sn-glycerol 3-phosphate. The polypeptide is Glycerol kinase (Petrotoga mobilis (strain DSM 10674 / SJ95)).